We begin with the raw amino-acid sequence, 328 residues long: Gonadotropin-releasing hormone receptor (328 aa).

Topologically, residues 1-38 (MANSASPEQNQNHCSAINNSIPLMQGNLPTLTLSGKIR) are extracellular. A glycan (N-linked (GlcNAc...) asparagine) is linked at N18. A helical membrane pass occupies residues 39-58 (VTVTFFLFLLSATFNASFLL). Over 59-77 (KLQKWTQKKEKGKKLSRMK) the chain is Cytoplasmic. The chain crosses the membrane as a helical span at residues 78–97 (LLLKHLTLANLLETLIVMPL). The Extracellular portion of the chain corresponds to 98 to 115 (DGMWNITVQWYAGELLCK). An N-linked (GlcNAc...) asparagine glycan is attached at N102. C114 and C196 are joined by a disulfide. The chain crosses the membrane as a helical span at residues 116–137 (VLSYLKLFSMYAPAFMMVVISL). Topologically, residues 138–164 (DRSLAITRPLALKSNSKVGQSMVGLAW) are cytoplasmic. The chain crosses the membrane as a helical span at residues 165 to 184 (ILSSVFAGPQLYIFRMIHLA). Residues 185–212 (DSSGQTKVFSQCVTHCSFSQWWHQAFYN) are Extracellular-facing. A helical transmembrane segment spans residues 213-232 (FFTFSCLFIIPLFIMLICNA). Topologically, residues 233-281 (KIIFTLTRVLHQDPHELQLNQSKNNIPRARLKTLKMTVAFATSFTVCWT) are cytoplasmic. The helical transmembrane segment at 282 to 300 (PYYVLGIWYWFDPEMLNRL) threads the bilayer. The Extracellular portion of the chain corresponds to 301–306 (SDPVNH). A helical membrane pass occupies residues 307–326 (FFFLFAFLNPCFDPLIYGYF). The Cytoplasmic portion of the chain corresponds to 327–328 (SL).

This sequence belongs to the G-protein coupled receptor 1 family. Pituitary, ovary, testis, breast and prostate but not in liver and spleen.

The protein resides in the cell membrane. In terms of biological role, receptor for gonadotropin releasing hormone (GnRH) that mediates the action of GnRH to stimulate the secretion of the gonadotropic hormones luteinizing hormone (LH) and follicle-stimulating hormone (FSH). This receptor mediates its action by association with G-proteins that activate a phosphatidylinositol-calcium second messenger system. Isoform 2 may act as an inhibitor of GnRH-R signaling. This Homo sapiens (Human) protein is Gonadotropin-releasing hormone receptor (GNRHR).